We begin with the raw amino-acid sequence, 523 residues long: Putative F-box protein At1g30925 (523 aa).

The F-box domain occupies 4 to 44; it reads FPNDDLVYEILLRLPAKSVARCSCVSKLRRSILSRQDFTEL.

This is Putative F-box protein At1g30925 from Arabidopsis thaliana (Mouse-ear cress).